The sequence spans 568 residues: Probable WRKY transcription factor 34 (568 aa).

Residues 172–236 (ACCAPADDGY…YTGDHIHSKP (65 aa)) constitute a DNA-binding region (WRKY 1). Residues C203, C208, H231, and H233 each contribute to the Zn(2+) site. 2 disordered regions span residues 230–252 (DHIH…TGQD) and 337–360 (KRRK…EPRV). A DNA-binding region (WRKY 2) is located at residues 366–431 (SDIDILDDGY…YIGKHTHVVP (66 aa)). Zn(2+) is bound by residues C397, C402, H426, and H428.

It belongs to the WRKY group I family.

The protein resides in the nucleus. Its function is as follows. Transcription factor. Interacts specifically with the W box (5'-(T)TGAC[CT]-3'), a frequently occurring elicitor-responsive cis-acting element. In Arabidopsis thaliana (Mouse-ear cress), this protein is Probable WRKY transcription factor 34 (WRKY34).